Reading from the N-terminus, the 393-residue chain is Putative N(4)-(beta-N-acetylglucosaminyl)-L-asparaginase CG1827 (393 aa).

The N-terminal stretch at 1-23 is a signal peptide; that stretch reads MRRHLRASLWILCLATMAFSILA. N-linked (GlcNAc...) asparagine glycans are attached at residues N49 and N64. 2 cysteine pairs are disulfide-bonded: C97–C102 and C196–C212. T243 functions as the Nucleophile in the catalytic mechanism. Substrate is bound by residues 271 to 274 and 294 to 297; these read RVGD and TGDG. A disulfide bond links C354 and C381.

It belongs to the Ntn-hydrolase family. Heterotetramer of two alpha and two beta chains arranged as a dimer of alpha/beta heterodimers. Post-translationally, cleaved into an alpha and beta chain by autocatalysis; this activates the enzyme. The N-terminal residue of the beta subunit is responsible for the nucleophile hydrolase activity.

The enzyme catalyses N(4)-(beta-N-acetyl-D-glucosaminyl)-L-asparagine + H2O = N-acetyl-beta-D-glucosaminylamine + L-aspartate + H(+). In terms of biological role, cleaves the GlcNAc-Asn bond which joins oligosaccharides to the peptide of asparagine-linked glycoproteins. The protein is Putative N(4)-(beta-N-acetylglucosaminyl)-L-asparaginase CG1827 of Drosophila melanogaster (Fruit fly).